A 133-amino-acid chain; its full sequence is Small ribosomal subunit protein uS11 (133 aa).

Residues 1-23 (MPPKTRGAVRKPRKKDKKNIALG) form a disordered region. The segment covering 7–17 (GAVRKPRKKDK) has biased composition (basic residues).

This sequence belongs to the universal ribosomal protein uS11 family. In terms of assembly, part of the 30S ribosomal subunit. Interacts with proteins S7 and S18. Binds to IF-3.

Its function is as follows. Located on the platform of the 30S subunit, it bridges several disparate RNA helices of the 16S rRNA. Forms part of the Shine-Dalgarno cleft in the 70S ribosome. In Arthrobacter sp. (strain FB24), this protein is Small ribosomal subunit protein uS11.